Reading from the N-terminus, the 199-residue chain is Crossover junction endodeoxyribonuclease RuvC (199 aa).

Active-site residues include aspartate 7, glutamate 68, and aspartate 141. Mg(2+) is bound by residues aspartate 7, glutamate 68, and aspartate 141.

The protein belongs to the RuvC family. In terms of assembly, homodimer which binds Holliday junction (HJ) DNA. The HJ becomes 2-fold symmetrical on binding to RuvC with unstacked arms; it has a different conformation from HJ DNA in complex with RuvA. In the full resolvosome a probable DNA-RuvA(4)-RuvB(12)-RuvC(2) complex forms which resolves the HJ. The cofactor is Mg(2+).

Its subcellular location is the cytoplasm. The enzyme catalyses Endonucleolytic cleavage at a junction such as a reciprocal single-stranded crossover between two homologous DNA duplexes (Holliday junction).. Functionally, the RuvA-RuvB-RuvC complex processes Holliday junction (HJ) DNA during genetic recombination and DNA repair. Endonuclease that resolves HJ intermediates. Cleaves cruciform DNA by making single-stranded nicks across the HJ at symmetrical positions within the homologous arms, yielding a 5'-phosphate and a 3'-hydroxyl group; requires a central core of homology in the junction. The consensus cleavage sequence is 5'-(A/T)TT(C/G)-3'. Cleavage occurs on the 3'-side of the TT dinucleotide at the point of strand exchange. HJ branch migration catalyzed by RuvA-RuvB allows RuvC to scan DNA until it finds its consensus sequence, where it cleaves and resolves the cruciform DNA. This is Crossover junction endodeoxyribonuclease RuvC from Saccharopolyspora erythraea (strain ATCC 11635 / DSM 40517 / JCM 4748 / NBRC 13426 / NCIMB 8594 / NRRL 2338).